The sequence spans 235 residues: uncharacterized protein (235 aa).

An N-terminal signal peptide occupies residues 1-24; that stretch reads MSDRMKLKGLLAFCLLFLSSFVLA.

This is an uncharacterized protein from Haemophilus influenzae (strain ATCC 51907 / DSM 11121 / KW20 / Rd).